We begin with the raw amino-acid sequence, 407 residues long: Tyrosine--tRNA ligase (407 aa).

L-tyrosine is bound at residue Tyr-35. Residues 40-49 (PTADSLHVGH) carry the 'HIGH' region motif. The L-tyrosine site is built by Tyr-168 and Gln-172. A 'KMSKS' region motif is present at residues 228–232 (KMGKT). Lys-231 contacts ATP. Positions 341–405 (NLLVDLLVKC…RGKKNFNRIV (65 aa)) constitute an S4 RNA-binding domain.

It belongs to the class-I aminoacyl-tRNA synthetase family. TyrS type 1 subfamily. As to quaternary structure, homodimer.

It is found in the cytoplasm. It catalyses the reaction tRNA(Tyr) + L-tyrosine + ATP = L-tyrosyl-tRNA(Tyr) + AMP + diphosphate + H(+). Its function is as follows. Catalyzes the attachment of tyrosine to tRNA(Tyr) in a two-step reaction: tyrosine is first activated by ATP to form Tyr-AMP and then transferred to the acceptor end of tRNA(Tyr). This chain is Tyrosine--tRNA ligase, found in Clostridium botulinum (strain Kyoto / Type A2).